A 561-amino-acid chain; its full sequence is Mercuric reductase (561 aa).

Positions 1-65 (MTTLKITGMT…AVAGLGYEAT (65 aa)) constitute an HMA domain. Residues Cys-11 and Cys-14 each coordinate a metal cation. FAD-binding residues include Ala-110, Gly-130, and Thr-135. A disulfide bridge links Cys-136 with Cys-141. FAD-binding residues include Lys-145, Ala-211, Asp-403, and Val-411. Hg(2+) contacts are provided by Cys-558 and Cys-559.

Belongs to the class-I pyridine nucleotide-disulfide oxidoreductase family. As to quaternary structure, homodimer. FAD is required as a cofactor.

The catalysed reaction is Hg + NADP(+) + H(+) = Hg(2+) + NADPH. Resistance to Hg(2+) in bacteria appears to be governed by a specialized system which includes mercuric reductase. MerA protein is responsible for volatilizing mercury as Hg(0). In Enterobacter agglomerans (Erwinia herbicola), this protein is Mercuric reductase (merA).